Here is a 474-residue protein sequence, read N- to C-terminus: Hepatocyte nuclear factor 4-alpha (474 aa).

The segment at residues 57–132 (SALCAICGDR…AGMKKEAVQN (76 aa)) is a DNA-binding region (nuclear receptor). NR C4-type zinc fingers lie at residues 60 to 80 (CAICGDRATGKHYGASSCDGC) and 96 to 120 (CRFSRQCVVDKDKRNQCRYCRLKKC). Ser-142 and Ser-143 each carry phosphoserine; by PKA. Residue Tyr-144 is modified to Phosphotyrosine. One can recognise an NR LBD domain in the interval 147–377 (SSLPSINALL…NLLQEMLLGG (231 aa)). Phosphothreonine is present on Thr-166. Ser-167 is subject to Phosphoserine. Glycyl lysine isopeptide (Lys-Gly) (interchain with G-Cter in ubiquitin) cross-links involve residues Lys-234 and Lys-307. Ser-313 bears the Phosphoserine; by AMPK mark. Residues 368–376 (NLLQEMLLG) carry the 9aaTAD motif. Positions 413–450 (SNGQMCEWPRPRGQAATPETPQPSPPSGSGSESYKLLP) are disordered. 2 positions are modified to phosphothreonine: Thr-429 and Thr-432. Position 436 is a phosphoserine (Ser-436). Lys-458 bears the N6-acetyllysine mark.

The protein belongs to the nuclear hormone receptor family. NR2 subfamily. As to quaternary structure, homodimerization is required for HNF4-alpha to bind to its recognition site. Interacts with CLOCK, BMAL1, CRY1, CRY2, PER1 and PER2. Interacts with NR0B2/SHP; the resulting heterodimer is transcriptionally inactive. Interacts with DDX3X; this interaction disrupts the interaction between HNF4 and NR0B2 that forms inactive heterodimers and enhances the formation of active HNF4 homodimers. Phosphorylation at Ser-313 by AMPK reduces the ability to form homodimers and bind DNA. Phosphorylated in the recognition sequence R-R-S-S near the DNA-binding domain; phosphorylation results in decrease in DNA-binding activity. Phosphorylation of HNF4 depends on the diet and is decreased by a carbohydrate-rich diet and is increased by fasting. Post-translationally, the N-terminus is blocked. In terms of processing, acetylation at Lys-458 lowers transcriptional activation by about two-fold. Liver, kidney and intestine.

The protein localises to the nucleus. In terms of biological role, transcriptional regulator which controls the expression of hepatic genes during the transition of endodermal cells to hepatic progenitor cells, facilitating the recruitment of RNA pol II to the promoters of target genes. Activates the transcription of CYP2C38. Represses the CLOCK-BMAL1 transcriptional activity and is essential for circadian rhythm maintenance and period regulation in the liver and colon cells. This chain is Hepatocyte nuclear factor 4-alpha (Hnf4a), found in Rattus norvegicus (Rat).